A 152-amino-acid chain; its full sequence is Large ribosomal subunit protein bL9 (152 aa).

It belongs to the bacterial ribosomal protein bL9 family.

Functionally, binds to the 23S rRNA. In Parasynechococcus marenigrum (strain WH8102), this protein is Large ribosomal subunit protein bL9.